The primary structure comprises 400 residues: 11-beta-hydroxysteroid dehydrogenase type 2 (400 aa).

Position 82–111 (82–111 (TRAVLITGCDTGFGKETAKKLDAMGFTVLA)) interacts with NAD(+). Serine 219 is a substrate binding site. The active-site Proton acceptor is the tyrosine 232. The disordered stretch occupies residues 378–400 (PGQPGPVHDTTQDPNPSPTVSAL). The span at 389–400 (QDPNPSPTVSAL) shows a compositional bias: polar residues.

It belongs to the short-chain dehydrogenases/reductases (SDR) family. As to quaternary structure, interacts with ligand-free cytoplasmic NR3C2. As to expression, highly expressed in kidney, adrenal gland and distal colon, and at much lower levels in lung, hypothalamus, hippocampus, and midbrain.

Its subcellular location is the microsome. The protein localises to the endoplasmic reticulum. The enzyme catalyses an 11beta-hydroxysteroid + NAD(+) = an 11-oxosteroid + NADH + H(+). The catalysed reaction is corticosterone + NAD(+) = 11-dehydrocorticosterone + NADH + H(+). It carries out the reaction 11beta,17beta-dihydroxyandrost-4-ene-3-one + NAD(+) = 17beta-hydroxyandrost-4-ene-3,11-dione + NADH + H(+). It catalyses the reaction 11beta-hydroxyandrost-4-ene-3,17-dione + NAD(+) = androst-4-ene-3,11,17-trione + NADH + H(+). It participates in steroid metabolism. Its activity is regulated as follows. Inhibited by glycyrrhetinic acid. Induced by progesterone, through the Ihh signaling pathway. In terms of biological role, catalyzes the conversion of biologically active 11beta-hydroxyglucocorticoids (11beta-hydroxysteroid) such as corticosterone, to inactive 11-ketoglucocorticoids (11-oxosteroid) such as 11-dehydrocorticosterone, in the presence of NAD(+). Functions as a dehydrogenase (oxidase), thereby decreasing the concentration of active glucocorticoids, thus protecting the nonselective mineralocorticoid receptor from occupation by glucocorticoids. Plays an important role in maintaining glucocorticoids balance during preimplantation and protects the fetus from excessive maternal corticosterone exposure. Catalyzes the oxidation of 11beta-hydroxytestosterone (11beta,17beta-dihydroxyandrost-4-ene-3-one) to 11-ketotestosterone (17beta-hydroxyandrost-4-ene-3,11-dione), a major bioactive androgen. Catalyzes the conversion of 11beta-hydroxyandrostenedione (11beta-hydroxyandrost-4-ene-3,17-dione) to 11-ketoandrostenedione (androst-4-ene-3,11,17-trione), which can be further metabolized to 11-ketotestosterone. Converts 7-beta-25-dihydroxycholesterol to 7-oxo-25-hydroxycholesterol in vitro. 7-beta-25-dihydroxycholesterol (not 7-oxo-25-hydroxycholesterol) acts as a ligand for the G-protein-coupled receptor (GPCR) Epstein-Barr virus-induced gene 2 (EBI2) and may thereby regulate immune cell migration. This chain is 11-beta-hydroxysteroid dehydrogenase type 2 (Hsd11b2), found in Rattus norvegicus (Rat).